The chain runs to 101 residues: Urease subunit beta (101 aa).

It belongs to the urease beta subunit family. In terms of assembly, heterotrimer of UreA (gamma), UreB (beta) and UreC (alpha) subunits. Three heterotrimers associate to form the active enzyme.

The protein localises to the cytoplasm. The catalysed reaction is urea + 2 H2O + H(+) = hydrogencarbonate + 2 NH4(+). Its pathway is nitrogen metabolism; urea degradation; CO(2) and NH(3) from urea (urease route): step 1/1. The protein is Urease subunit beta of Pseudomonas aeruginosa (strain LESB58).